A 100-amino-acid chain; its full sequence is MPLDNSFPLSQLSKVSERVLEIHLELLDTKSKLNDIYKDICELQRFTEQLINDDDLRESYVSSKPELSKNWEKLKKEIEQKHKEIQELISEFDNMFINSF.

Residues 65-96 adopt a coiled-coil conformation; that stretch reads PELSKNWEKLKKEIEQKHKEIQELISEFDNMF.

This is an uncharacterized protein from Acidianus filamentous virus 2 (isolate Italy/Pozzuoli) (AFV-2).